The sequence spans 296 residues: tRNA dimethylallyltransferase (296 aa).

10 to 17 (GPTASGKT) contacts ATP. Residue 12 to 17 (TASGKT) participates in substrate binding. An interaction with substrate tRNA region spans residues 35–38 (DSRQ).

This sequence belongs to the IPP transferase family. In terms of assembly, monomer. It depends on Mg(2+) as a cofactor.

The enzyme catalyses adenosine(37) in tRNA + dimethylallyl diphosphate = N(6)-dimethylallyladenosine(37) in tRNA + diphosphate. Functionally, catalyzes the transfer of a dimethylallyl group onto the adenine at position 37 in tRNAs that read codons beginning with uridine, leading to the formation of N6-(dimethylallyl)adenosine (i(6)A). The protein is tRNA dimethylallyltransferase of Synechococcus sp. (strain RCC307).